Consider the following 561-residue polypeptide: Urocanate hydratase (561 aa).

Residues Gly-52–Gly-53, Gln-130, Gly-176–Gly-178, Glu-196, Arg-201, Asn-242–Ala-243, Gln-263–His-267, Tyr-273–Leu-274, and Tyr-322 each bind NAD(+). The active site involves Cys-410. Residue Gly-492 participates in NAD(+) binding.

This sequence belongs to the urocanase family. Requires NAD(+) as cofactor.

The protein localises to the cytoplasm. The enzyme catalyses 4-imidazolone-5-propanoate = trans-urocanate + H2O. The protein operates within amino-acid degradation; L-histidine degradation into L-glutamate; N-formimidoyl-L-glutamate from L-histidine: step 2/3. Its function is as follows. Catalyzes the conversion of urocanate to 4-imidazolone-5-propionate. In Salmonella choleraesuis (strain SC-B67), this protein is Urocanate hydratase.